A 70-amino-acid chain; its full sequence is ATP synthase subunit c (70 aa).

Helical transmembrane passes span 4–24 and 45–65; these read IAAA…NGLI and IMFI…VIAF.

This sequence belongs to the ATPase C chain family. F-type ATPases have 2 components, F(1) - the catalytic core - and F(0) - the membrane proton channel. F(1) has five subunits: alpha(3), beta(3), gamma(1), delta(1), epsilon(1). F(0) has three main subunits: a(1), b(2) and c(10-14). The alpha and beta chains form an alternating ring which encloses part of the gamma chain. F(1) is attached to F(0) by a central stalk formed by the gamma and epsilon chains, while a peripheral stalk is formed by the delta and b chains.

The protein localises to the cell membrane. F(1)F(0) ATP synthase produces ATP from ADP in the presence of a proton or sodium gradient. F-type ATPases consist of two structural domains, F(1) containing the extramembraneous catalytic core and F(0) containing the membrane proton channel, linked together by a central stalk and a peripheral stalk. During catalysis, ATP synthesis in the catalytic domain of F(1) is coupled via a rotary mechanism of the central stalk subunits to proton translocation. Functionally, key component of the F(0) channel; it plays a direct role in translocation across the membrane. A homomeric c-ring of between 10-14 subunits forms the central stalk rotor element with the F(1) delta and epsilon subunits. In Staphylococcus haemolyticus (strain JCSC1435), this protein is ATP synthase subunit c.